The following is a 445-amino-acid chain: Phosphoglucosamine mutase (445 aa).

Serine 102 serves as the catalytic Phosphoserine intermediate. 4 residues coordinate Mg(2+): serine 102, aspartate 241, aspartate 243, and aspartate 245. Serine 102 carries the phosphoserine modification.

The protein belongs to the phosphohexose mutase family. It depends on Mg(2+) as a cofactor. Post-translationally, activated by phosphorylation.

The catalysed reaction is alpha-D-glucosamine 1-phosphate = D-glucosamine 6-phosphate. Its function is as follows. Catalyzes the conversion of glucosamine-6-phosphate to glucosamine-1-phosphate. The protein is Phosphoglucosamine mutase of Acinetobacter baumannii (strain AB0057).